A 361-amino-acid chain; its full sequence is Biotin synthase (361 aa).

A Radical SAM core domain is found at 47 to 278; the sequence is VHGDEVALCG…AAHIFVMGGR (232 aa). 3 residues coordinate [4Fe-4S] cluster: C65, C69, and C72. The [2Fe-2S] cluster site is built by S110, C143, and C203. Residues 323–361 form a disordered region; it reads TLRPPDTGKPWAFDGHAPSDADWNRKAAEPRPRPLPVVR. The span at 339 to 354 shows a compositional bias: basic and acidic residues; sequence APSDADWNRKAAEPRP.

It belongs to the radical SAM superfamily. Biotin synthase family. As to quaternary structure, homodimer. Requires [4Fe-4S] cluster as cofactor. It depends on [2Fe-2S] cluster as a cofactor.

The enzyme catalyses (4R,5S)-dethiobiotin + (sulfur carrier)-SH + 2 reduced [2Fe-2S]-[ferredoxin] + 2 S-adenosyl-L-methionine = (sulfur carrier)-H + biotin + 2 5'-deoxyadenosine + 2 L-methionine + 2 oxidized [2Fe-2S]-[ferredoxin]. Its pathway is cofactor biosynthesis; biotin biosynthesis; biotin from 7,8-diaminononanoate: step 2/2. Catalyzes the conversion of dethiobiotin (DTB) to biotin by the insertion of a sulfur atom into dethiobiotin via a radical-based mechanism. This chain is Biotin synthase, found in Anaeromyxobacter sp. (strain K).